Consider the following 99-residue polypeptide: Aspartyl/glutamyl-tRNA(Asn/Gln) amidotransferase subunit C (99 aa).

This sequence belongs to the GatC family. As to quaternary structure, heterotrimer of A, B and C subunits.

It catalyses the reaction L-glutamyl-tRNA(Gln) + L-glutamine + ATP + H2O = L-glutaminyl-tRNA(Gln) + L-glutamate + ADP + phosphate + H(+). It carries out the reaction L-aspartyl-tRNA(Asn) + L-glutamine + ATP + H2O = L-asparaginyl-tRNA(Asn) + L-glutamate + ADP + phosphate + 2 H(+). Its function is as follows. Allows the formation of correctly charged Asn-tRNA(Asn) or Gln-tRNA(Gln) through the transamidation of misacylated Asp-tRNA(Asn) or Glu-tRNA(Gln) in organisms which lack either or both of asparaginyl-tRNA or glutaminyl-tRNA synthetases. The reaction takes place in the presence of glutamine and ATP through an activated phospho-Asp-tRNA(Asn) or phospho-Glu-tRNA(Gln). This Ralstonia pickettii (strain 12J) protein is Aspartyl/glutamyl-tRNA(Asn/Gln) amidotransferase subunit C.